Here is a 697-residue protein sequence, read N- to C-terminus: Transmembrane protein 168 (697 aa).

The next 3 membrane-spanning stretches (helical) occupy residues 36 to 56 (LGYL…YVRW), 63 to 83 (LILV…ILYY), and 89 to 109 (AASL…LCFL). N-linked (GlcNAc...) asparagine glycosylation is present at asparagine 111. The next 5 membrane-spanning stretches (helical) occupy residues 172-192 (MLVE…MLII), 199-219 (FLAI…SLET), 223-243 (PIAF…DIYF), 265-285 (LSVV…AFKL), and 293-313 (FVIP…IIFL). Asparagine 337 is a glycosylation site (N-linked (GlcNAc...) asparagine). The next 2 membrane-spanning stretches (helical) occupy residues 352-372 (FCLI…ILGA) and 380-400 (GIFL…HGLF). Asparagine 533 and asparagine 598 each carry an N-linked (GlcNAc...) asparagine glycan. The helical transmembrane segment at 646–666 (ITYPLVHLANWLCGLNLFWMC) threads the bilayer.

The protein belongs to the TMEM168 family.

The protein resides in the nucleus membrane. Plays a key role in maintaining the cardiac electrical stability by modulating cell surface expression of SCN5A. May play a role i the modulation of anxiety behavior by regulating GABAergic neuronal system in the nucleus accumbens. The protein is Transmembrane protein 168 (Tmem168) of Rattus norvegicus (Rat).